The primary structure comprises 1368 residues: DNA-directed RNA polymerase subunit beta (1368 aa).

Belongs to the RNA polymerase beta chain family. In terms of assembly, the RNAP catalytic core consists of 2 alpha, 1 beta, 1 beta' and 1 omega subunit. When a sigma factor is associated with the core the holoenzyme is formed, which can initiate transcription.

It carries out the reaction RNA(n) + a ribonucleoside 5'-triphosphate = RNA(n+1) + diphosphate. In terms of biological role, DNA-dependent RNA polymerase catalyzes the transcription of DNA into RNA using the four ribonucleoside triphosphates as substrates. This is DNA-directed RNA polymerase subunit beta from Legionella pneumophila (strain Corby).